Reading from the N-terminus, the 342-residue chain is Elongation factor Ts (342 aa).

The interval 80–83 (TDFV) is involved in Mg(2+) ion dislocation from EF-Tu.

This sequence belongs to the EF-Ts family.

It is found in the cytoplasm. Associates with the EF-Tu.GDP complex and induces the exchange of GDP to GTP. It remains bound to the aminoacyl-tRNA.EF-Tu.GTP complex up to the GTP hydrolysis stage on the ribosome. This is Elongation factor Ts from Lactobacillus delbrueckii subsp. bulgaricus (strain ATCC 11842 / DSM 20081 / BCRC 10696 / JCM 1002 / NBRC 13953 / NCIMB 11778 / NCTC 12712 / WDCM 00102 / Lb 14).